Here is a 439-residue protein sequence, read N- to C-terminus: Agmatine coumaroyltransferase-1 (439 aa).

Catalysis depends on proton acceptor residues histidine 152 and aspartate 385.

This sequence belongs to the plant acyltransferase family. Monomer.

It carries out the reaction 4-coumaroyl-CoA + agmatine = N-(4-guanidinobutyl)-4-hydroxycinnamamide + CoA + H(+). Inhibited by DEPC. Completely inhibited by ZnSO(4), strongly inhibited by CuSO(4), partially inhibited by MnCl(2). Unaffected by MgCl(2) or CaCl(2). In terms of biological role, involved in the synthesis of hordatines (antifungal hydroxycinnamoylagmatine derivatives). Specific for agmatine as the acyl acceptor, inactive towards tyramine and putrescine. Has activity with the acyl donors 4-coumaroyl-CoA, cinnamoyl-CoA, caffeoyl-CoA, feruloyl-CoA, and to a lesser extent sinapoyl-CoA. This Hordeum vulgare (Barley) protein is Agmatine coumaroyltransferase-1 (ACT-1).